The primary structure comprises 276 residues: Glutamate racemase (276 aa).

Substrate-binding positions include 10–11 (DS) and 42–43 (YG). The Proton donor/acceptor role is filled by C74. Residue 75–76 (NT) participates in substrate binding. C185 serves as the catalytic Proton donor/acceptor. Residue 186–187 (TH) participates in substrate binding.

It belongs to the aspartate/glutamate racemases family.

It catalyses the reaction L-glutamate = D-glutamate. It functions in the pathway cell wall biogenesis; peptidoglycan biosynthesis. Its function is as follows. Provides the (R)-glutamate required for cell wall biosynthesis. In Levilactobacillus brevis (Lactobacillus brevis), this protein is Glutamate racemase.